Here is a 255-residue protein sequence, read N- to C-terminus: MHRGKGMKFVGDSRIPAEKKPNIPKDYSEYPGKTEAFWPNFLLKEWMVGAVFLIGFLVLTIVHQPPLERMADPTDTGYIPLPDWYFLFLYQLLKYEYAAGSFTVVGAMIMPGLAFGALLLAPFLDRGTERRPWKRPVAVGMMLLAISAAVFLTWQSVATHDWAKAEEQGKITKEADIDTNAEGYKVFKEQGCISCHGDNLQGGAAGPSLVDSGLKPDEIKKIAVEGKGKMPAGVFKGNDKQLEELAKFISETTAK.

3 helical membrane-spanning segments follow: residues 46–62 (WMVG…LTIV), 104–124 (VVGA…APFL), and 137–157 (VAVG…WQSV). Residues 178–253 (DTNAEGYKVF…ELAKFISETT (76 aa)) form the Cytochrome c domain. 3 residues coordinate heme c: Cys192, Cys195, and His196.

Belongs to the cytochrome b family. The main subunits of the menaquinol:cytochrome c complex are a Rieske-type iron-sulfur protein (QcrA), a cytochrome b (QcrB) and a cytochrome c (QcrC). It depends on heme c as a cofactor.

The protein resides in the cell membrane. In terms of biological role, component of the menaquinol:cytochrome c reductase complex. This Bacillus subtilis (strain 168) protein is Menaquinol:cytochrome c reductase cytochrome c subunit (qcrC).